The sequence spans 181 residues: MAIENCLQLSTSASVGTVAVKSHVHHLQPSSKVNVPTFRGLKRSFPALSSSVSSSSPRQFRYSSVVCKASEAVKEVQDVNDSSWKEFVLESEVPVMVDFWAPWCGPCKLIAPVIDELAKEYSGKIAVYKLNTDEAPGIATQYNIRSIPTVLFFKNGERKESIIGAVPKSTLTDSIEKYLSP.

Residues 1 to 67 (MAIENCLQLS…RQFRYSSVVC (67 aa)) constitute a chloroplast transit peptide. Residues 68–180 (KASEAVKEVQ…LTDSIEKYLS (113 aa)) form the Thioredoxin domain. Residues Cys-104 and Cys-107 each act as nucleophile in the active site. Cys-104 and Cys-107 are disulfide-bonded.

The protein belongs to the thioredoxin family. Plant M-type subfamily. Forms a complex with heterodimeric ferredoxin-thioredoxin reductase (FTR) and ferredoxin.

The protein resides in the plastid. It localises to the chloroplast. Participates in various redox reactions through the reversible oxidation of the active center dithiol to a disulfide. The M form is known to activate NADP-malate dehydrogenase. This Spinacia oleracea (Spinach) protein is Thioredoxin M-type, chloroplastic.